The chain runs to 257 residues: Uroplakin-1a (257 aa).

The Cytoplasmic segment spans residues 1–13 (MASAATEGEKGSP). The helical transmembrane segment at 14 to 34 (VVVGLLVVGNIIILLSGLALF) threads the bilayer. The Extracellular segment spans residues 35-58 (AETVWVTADQYRVYPLMGVSGKDD). Residues 59–85 (VFAGAWIAIFCGFSFFVVASFGVGAAL) form a helical membrane-spanning segment. Residues 86–90 (CRRRY) lie on the Cytoplasmic side of the membrane. Residues 91–111 (MILTYLLLMLIVYIFECASCI) form a helical membrane-spanning segment. Residues 112-229 (TSYTHRDYMV…HIGHAIDSYT (118 aa)) are Extracellular-facing. Residue asparagine 169 is glycosylated (N-linked (GlcNAc...) asparagine). A helical transmembrane segment spans residues 230 to 251 (WGISWFGFAILMWTLPVMLIAM). Residues 252-257 (YFYTTL) lie on the Cytoplasmic side of the membrane.

The protein belongs to the tetraspanin (TM4SF) family. Homodimer; disulfide-linked. Interacts with uroplakin-2 (UPK2). Binds to uropathogenic E.coli fimH.

The protein resides in the membrane. In terms of biological role, component of the asymmetric unit membrane (AUM); a highly specialized biomembrane elaborated by terminally differentiated urothelial cells. May play an important role in normal bladder epithelial physiology, possibly in regulating membrane permeability of superficial umbrella cells or in stabilizing the apical membrane through AUM/cytoskeletal interactions. The protein is Uroplakin-1a (Upk1a) of Mus musculus (Mouse).